The primary structure comprises 159 residues: MKIRIGHGFDVHKFGGEPPLILGGVDVPYEVGLIAHSDGDVALHAISDAILGAMALGDIGKHFPDTDPEFKGADSRVLLRHCYQLATDMGFSLSNLDVTIIAQAPKMAPHIEAIRKVLAADLVADINDINVKATTTEKLGFTGRKEGIAVEAVVLMIKA.

Residues Asp-10 and His-12 each coordinate a divalent metal cation. Residues 10-12 (DVH) and 36-37 (HS) each bind 4-CDP-2-C-methyl-D-erythritol 2-phosphate. Position 44 (His-44) interacts with a divalent metal cation. 4-CDP-2-C-methyl-D-erythritol 2-phosphate-binding positions include 58–60 (DIG), 63–67 (FPDTD), 102–108 (AQAPKMA), 134–137 (TTTE), Phe-141, and Arg-144.

This sequence belongs to the IspF family. Homotrimer. Requires a divalent metal cation as cofactor.

The catalysed reaction is 4-CDP-2-C-methyl-D-erythritol 2-phosphate = 2-C-methyl-D-erythritol 2,4-cyclic diphosphate + CMP. It functions in the pathway isoprenoid biosynthesis; isopentenyl diphosphate biosynthesis via DXP pathway; isopentenyl diphosphate from 1-deoxy-D-xylulose 5-phosphate: step 4/6. In terms of biological role, involved in the biosynthesis of isopentenyl diphosphate (IPP) and dimethylallyl diphosphate (DMAPP), two major building blocks of isoprenoid compounds. Catalyzes the conversion of 4-diphosphocytidyl-2-C-methyl-D-erythritol 2-phosphate (CDP-ME2P) to 2-C-methyl-D-erythritol 2,4-cyclodiphosphate (ME-CPP) with a corresponding release of cytidine 5-monophosphate (CMP). This chain is 2-C-methyl-D-erythritol 2,4-cyclodiphosphate synthase, found in Shewanella halifaxensis (strain HAW-EB4).